The chain runs to 146 residues: Monothiol glutaredoxin-5, mitochondrial (146 aa).

A Glutaredoxin domain is found at 26–131 (RQALEQAVKE…KILKEINALA (106 aa)). Glutathione is bound at residue K43. Residue C51 coordinates [2Fe-2S] cluster. Residues 83–87 (REGIK), I95, and 108–109 (SD) contribute to the glutathione site.

It belongs to the glutaredoxin family. Monothiol subfamily. In terms of assembly, homodimer. Interacts with ISA1 and ISA2.

Its subcellular location is the mitochondrion. Its function is as follows. Monothiol glutaredoxin involved in mitochondrial iron-sulfur (Fe/S) cluster transfer. Receives 2Fe/2S clusters from scaffold protein isu1 and mediates their transfer to apoproteins, to the 4Fe/FS cluster biosynthesis machinery, or export from mitochondrion. The chain is Monothiol glutaredoxin-5, mitochondrial from Schizosaccharomyces pombe (strain 972 / ATCC 24843) (Fission yeast).